A 580-amino-acid polypeptide reads, in one-letter code: Long-chain-fatty-acid--AMP ligase FadD28 (580 aa).

The tract at residues 421-440 (SERTFGGKIVTPSPGTPEGP) is disordered.

Belongs to the ATP-dependent AMP-binding enzyme family.

The catalysed reaction is holo-[mycocerosate synthase] + a long-chain fatty acid + ATP = a long-chain fatty acyl-[mycocerosate synthase] + AMP + diphosphate. It catalyses the reaction a long-chain fatty acid + ATP + H(+) = a long-chain fatty acyl-AMP + diphosphate. The enzyme catalyses holo-[mycocerosate synthase] + a long-chain fatty acyl-AMP = a long-chain fatty acyl-[mycocerosate synthase] + AMP + H(+). Its pathway is lipid metabolism; fatty acid biosynthesis. Involved in the biosynthesis of phthiocerol dimycocerosate (PDIM), a cell wall-associated lipid found only in pathogenic mycobacteria. Catalyzes the activation of long-chain fatty acids as acyl-adenylates (acyl-AMP), which are then transferred to the multifunctional polyketide synthase Mas for further chain extension. The protein is Long-chain-fatty-acid--AMP ligase FadD28 (fadD28) of Mycobacterium bovis (strain ATCC BAA-935 / AF2122/97).